Reading from the N-terminus, the 489-residue chain is Serine/threonine-protein kinase dyf-5 (489 aa).

Positions 11–291 (YLMTKRLGDG…ANQSLRYKYF (281 aa)) constitute a Protein kinase domain. ATP-binding positions include 17–25 (LGDGTFGEV) and lysine 40. Aspartate 132 acts as the Proton acceptor in catalysis. 2 disordered regions span residues 366–385 (EKSD…KPTA) and 452–489 (QTGP…KYVK). Low complexity predominate over residues 458–473 (SNQTNNHSANNSHSPN).

This sequence belongs to the protein kinase superfamily. CMGC Ser/Thr protein kinase family. RCK subfamily. Requires Mg(2+) as cofactor. In terms of tissue distribution, expressed in head neurons including amphid and labial sensory neurons and 3 pairs of neurons in the tail including phasmid sensory neurons. In male, expressed in the tail including the sensory rays and the spicule.

The protein resides in the perikaryon. It localises to the cell projection. The protein localises to the dendrite. Its subcellular location is the axon. It is found in the cilium. The enzyme catalyses L-seryl-[protein] + ATP = O-phospho-L-seryl-[protein] + ADP + H(+). It catalyses the reaction L-threonyl-[protein] + ATP = O-phospho-L-threonyl-[protein] + ADP + H(+). Its function is as follows. Serine/threonine-protein kinase which is required for ciliogenesis. Regulates the length and the morphology of sensory neuron cilia. In addition, plays a role in the anterograde intraflagellar transport (IFT) in the cilia by regulating the undocking of kinesin-II motor complex (composed of klp-11, klp-20 and kap-1) before reaching the distal segment and the docking of kinesin motor osm-3 onto IFT cargos. The sequence is that of Serine/threonine-protein kinase dyf-5 from Caenorhabditis elegans.